The primary structure comprises 234 residues: LexA repressor (234 aa).

Positions 41-61 (RAEIAAELGFRSPNAAEEHLK) form a DNA-binding region, H-T-H motif. Residues Ser-152 and Lys-189 each act as for autocatalytic cleavage activity in the active site.

This sequence belongs to the peptidase S24 family. In terms of assembly, homodimer.

It catalyses the reaction Hydrolysis of Ala-|-Gly bond in repressor LexA.. Represses a number of genes involved in the response to DNA damage (SOS response), including recA and lexA. In the presence of single-stranded DNA, RecA interacts with LexA causing an autocatalytic cleavage which disrupts the DNA-binding part of LexA, leading to derepression of the SOS regulon and eventually DNA repair. The chain is LexA repressor from Polaromonas naphthalenivorans (strain CJ2).